We begin with the raw amino-acid sequence, 145 residues long: Large ribosomal subunit protein bL17 (145 aa).

The segment at 123–145 (KRVDRKKKDPAKDKTEEKKLATA) is disordered.

This sequence belongs to the bacterial ribosomal protein bL17 family. As to quaternary structure, part of the 50S ribosomal subunit. Contacts protein L32.

The polypeptide is Large ribosomal subunit protein bL17 (Pelagibacter ubique (strain HTCC1062)).